Consider the following 269-residue polypeptide: Phosphatidylglycerophosphate phosphatase 1, chloroplastic (269 aa).

A chloroplast-targeting transit peptide spans 1–33 (MRSVPGPSPPCTRSLAHSCRAAARGPCGSARPR). The tract at residues 25 to 46 (GPCGSARPRARSVSARAHSSEA) is disordered. Residues 29 to 46 (SARPRARSVSARAHSSEA) show a composition bias toward low complexity. Residues 103 to 107 (DKDNT) carry the Phosphoryl acceptor motif.

The protein belongs to the HAD-like hydrolase superfamily.

The protein resides in the plastid. It is found in the chloroplast. The enzyme catalyses a 1,2-diacyl-sn-glycero-3-phospho-(1'-sn-glycero-3'-phosphate) + H2O = a 1,2-diacyl-sn-glycero-3-phospho-(1'-sn-glycerol) + phosphate. Its pathway is phospholipid metabolism; phosphatidylglycerol biosynthesis; phosphatidylglycerol from CDP-diacylglycerol: step 2/2. In terms of biological role, phosphatidylglycerophosphate phosphatase involved in the biosynthesis of phosphatidylglycerol (PG), a phosphoglycerolipid predominantly present in chloroplastic thylakoid membranes and which has important photosynthetic function. Required for thylakoid membranes development and chloroplast function. The chain is Phosphatidylglycerophosphate phosphatase 1, chloroplastic from Chlamydomonas reinhardtii (Chlamydomonas smithii).